The chain runs to 369 residues: Beta-1,4-galactosyltransferase 2 (369 aa).

Residues 1–15 (MSRLLGGTLERVCKA) lie on the Cytoplasmic side of the membrane. A helical; Signal-anchor for type II membrane protein transmembrane segment spans residues 16-36 (VLLLCLLHFLVAVILYFDVYA). The Lumenal portion of the chain corresponds to 37–369 (QHLAFFSRFS…GQPMSWLTQG (333 aa)). Positions 58-73 (ASSSTNCSRPNATAAS) are enriched in polar residues. The interval 58-90 (ASSSTNCSRPNATAASSGLPEVPSARPGPTAPV) is disordered. N-linked (GlcNAc...) asparagine glycosylation is found at N63 and N68. The cysteines at positions 94 and 136 are disulfide-linked. UDP-alpha-D-galactose is bound by residues 147–151 (PFRHR), 186–188 (FNR), 214–215 (VD), and W275. Residues C208 and C227 are joined by a disulfide bond. D215 contributes to the Mn(2+) binding site. Residue 277–280 (GEDD) coordinates N-acetyl-D-glucosamine. Mn(2+) is bound at residue H308. 308–310 (HDR) contributes to the UDP-alpha-D-galactose binding site. Residue R320 participates in N-acetyl-D-glucosamine binding. An N-linked (GlcNAc...) asparagine glycan is attached at N354.

Belongs to the glycosyltransferase 7 family. Mn(2+) is required as a cofactor.

Its subcellular location is the golgi apparatus. It is found in the golgi stack membrane. It catalyses the reaction D-glucose + UDP-alpha-D-galactose = lactose + UDP + H(+). The catalysed reaction is an N-acetyl-beta-D-glucosaminyl derivative + UDP-alpha-D-galactose = a beta-D-galactosyl-(1-&gt;4)-N-acetyl-beta-D-glucosaminyl derivative + UDP + H(+). The enzyme catalyses N-acetyl-D-glucosamine + UDP-alpha-D-galactose = beta-D-galactosyl-(1-&gt;4)-N-acetyl-D-glucosamine + UDP + H(+). It participates in protein modification; protein glycosylation. In terms of biological role, responsible for the synthesis of complex-type N-linked oligosaccharides in many glycoproteins as well as the carbohydrate moieties of glycolipids. Can produce lactose. The sequence is that of Beta-1,4-galactosyltransferase 2 from Mus musculus (Mouse).